A 31-amino-acid chain; its full sequence is Cytochrome b6-f complex subunit 6 (31 aa).

A helical membrane pass occupies residues 4-26 (LTSYFGFLLAALTITSALFIGLN).

This sequence belongs to the PetL family. In terms of assembly, the 4 large subunits of the cytochrome b6-f complex are cytochrome b6, subunit IV (17 kDa polypeptide, PetD), cytochrome f and the Rieske protein, while the 4 small subunits are PetG, PetL, PetM and PetN. The complex functions as a dimer.

It localises to the plastid. The protein localises to the chloroplast thylakoid membrane. Its function is as follows. Component of the cytochrome b6-f complex, which mediates electron transfer between photosystem II (PSII) and photosystem I (PSI), cyclic electron flow around PSI, and state transitions. PetL is important for photoautotrophic growth as well as for electron transfer efficiency and stability of the cytochrome b6-f complex. The sequence is that of Cytochrome b6-f complex subunit 6 from Amaranthus caudatus (Love-lies-bleeding).